The following is a 422-amino-acid chain: Histone deacetylase B (422 aa).

Asp-102 contacts substrate. The active-site Proton acceptor is the His-144. Gly-152 serves as a coordination point for substrate. Residues Asp-179, His-181, and Asp-268 each coordinate a divalent metal cation. Tyr-307 serves as a coordination point for substrate. The interval 399 to 422 (IDFDRDEDSKENMDKRKKKHNDFS) is disordered. Residues 413–422 (KRKKKHNDFS) show a composition bias toward basic residues.

The protein belongs to the histone deacetylase family. HD type 1 subfamily.

The protein localises to the nucleus. The protein resides in the cytoplasm. The enzyme catalyses N(6)-acetyl-L-lysyl-[histone] + H2O = L-lysyl-[histone] + acetate. With respect to regulation, its activity is inhibited by trichostatin A (TSA), a well known histone deacetylase inhibitor. Cytosolic activity is refractory to inhibition by TSA, while the nuclear activity is inhibited completely. In terms of biological role, responsible for the deacetylation of lysine residues on the N-terminal part of the core histones (H2A, H2B, H3 and H4). Histone deacetylation plays an important role in transcriptional regulation, cell cycle progression and developmental events. Histone deacetylases act via the formation of large multiprotein complexes. May play a role in the regulation of the timing of gene expression during the development and in the definition aspects of the phenotype that mediate social behavior in genetically heterogeneous groups. The chain is Histone deacetylase B (hdaB) from Dictyostelium discoideum (Social amoeba).